We begin with the raw amino-acid sequence, 375 residues long: F420-dependent formate dehydrogenase 2 subunit beta (375 aa).

2 4Fe-4S ferredoxin-type domains span residues 268 to 291 (PEPE…DVCP) and 320 to 349 (IRLS…AKIY). [4Fe-4S] cluster is bound by residues C280, C283, C286, C290, C329, C332, C335, and C339.

It belongs to the FrhB family. Dimer of an alpha (FdhA2) and a beta (FdhB2) subunit. Requires [4Fe-4S] cluster as cofactor. It depends on FAD as a cofactor. Zn(2+) serves as cofactor.

It carries out the reaction oxidized coenzyme F420-(gamma-L-Glu)(n) + formate + 2 H(+) = reduced coenzyme F420-(gamma-L-Glu)(n) + CO2. Catalyzes the oxidation of formate to carbon dioxide, with coenzyme F420 as the electron acceptor. In vitro can also use methyl viologen as electron acceptor. The protein is F420-dependent formate dehydrogenase 2 subunit beta of Methanococcus maripaludis (strain DSM 14266 / JCM 13030 / NBRC 101832 / S2 / LL).